We begin with the raw amino-acid sequence, 446 residues long: Enolase 1 (446 aa).

Residues histidine 164 and glutamate 173 each contribute to the substrate site. The active-site Proton donor is the glutamate 216. Residues aspartate 251, glutamate 302, and aspartate 329 each contribute to the Mg(2+) site. Substrate-binding residues include glutamate 302 and aspartate 329. The active-site Proton acceptor is the lysine 354. Substrate-binding positions include 381–384 (SHRS) and lysine 405.

The protein belongs to the enolase family. In terms of assembly, homodimer. Mg(2+) serves as cofactor.

It localises to the cytoplasm. The enzyme catalyses (2R)-2-phosphoglycerate = phosphoenolpyruvate + H2O. It participates in carbohydrate degradation; glycolysis; pyruvate from D-glyceraldehyde 3-phosphate: step 4/5. This is Enolase 1 (ENO1) from Zea mays (Maize).